Consider the following 409-residue polypeptide: Type II methyltransferase M.BsuFI (409 aa).

The SAM-dependent MTase C5-type domain maps to 101 to 402; sequence LTFIDLFAGI…GAMKERLLLA (302 aa). C170 is a catalytic residue.

This sequence belongs to the class I-like SAM-binding methyltransferase superfamily. C5-methyltransferase family.

The enzyme catalyses a 2'-deoxycytidine in DNA + S-adenosyl-L-methionine = a 5-methyl-2'-deoxycytidine in DNA + S-adenosyl-L-homocysteine + H(+). Functionally, a methylase, recognizes the double-stranded sequence 5'-CCGG-3', methylates C-1 on both strands, and protects the DNA from cleavage by the BsuFI endonuclease. This chain is Type II methyltransferase M.BsuFI (hsdFM), found in Bacillus subtilis.